Here is a 48-residue protein sequence, read N- to C-terminus: Large ribosomal subunit protein bL32c (48 aa).

This sequence belongs to the bacterial ribosomal protein bL32 family.

It is found in the plastid. It localises to the chloroplast. This is Large ribosomal subunit protein bL32c (rpl32) from Vicia faba (Broad bean).